The chain runs to 321 residues: Acetyl-coenzyme A carboxylase carboxyl transferase subunit beta, chloroplastic (321 aa).

Residues 47–321 (LWAQCDNCEN…FWFYVLRSSL (275 aa)) form the CoA carboxyltransferase N-terminal domain. Positions 51, 54, 70, and 73 each coordinate Zn(2+). A C4-type zinc finger spans residues 51–73 (CDNCENLLYLRFLRENQSVCKEC).

This sequence belongs to the AccD/PCCB family. Acetyl-CoA carboxylase is a heterohexamer composed of biotin carboxyl carrier protein, biotin carboxylase and 2 subunits each of ACCase subunit alpha and ACCase plastid-coded subunit beta (accD). Zn(2+) is required as a cofactor.

The protein localises to the plastid. Its subcellular location is the chloroplast stroma. The enzyme catalyses N(6)-carboxybiotinyl-L-lysyl-[protein] + acetyl-CoA = N(6)-biotinyl-L-lysyl-[protein] + malonyl-CoA. The protein operates within lipid metabolism; malonyl-CoA biosynthesis; malonyl-CoA from acetyl-CoA: step 1/1. Component of the acetyl coenzyme A carboxylase (ACC) complex. Biotin carboxylase (BC) catalyzes the carboxylation of biotin on its carrier protein (BCCP) and then the CO(2) group is transferred by the transcarboxylase to acetyl-CoA to form malonyl-CoA. The chain is Acetyl-coenzyme A carboxylase carboxyl transferase subunit beta, chloroplastic from Pinus thunbergii (Japanese black pine).